Consider the following 305-residue polypeptide: Ribosomal RNA small subunit methyltransferase H (305 aa).

Residues 30–32, aspartate 49, phenylalanine 74, aspartate 96, and glutamine 103 contribute to the S-adenosyl-L-methionine site; that span reads GGH.

This sequence belongs to the methyltransferase superfamily. RsmH family.

The protein resides in the cytoplasm. The enzyme catalyses cytidine(1402) in 16S rRNA + S-adenosyl-L-methionine = N(4)-methylcytidine(1402) in 16S rRNA + S-adenosyl-L-homocysteine + H(+). In terms of biological role, specifically methylates the N4 position of cytidine in position 1402 (C1402) of 16S rRNA. This Francisella tularensis subsp. mediasiatica (strain FSC147) protein is Ribosomal RNA small subunit methyltransferase H.